The primary structure comprises 293 residues: G1/S-specific cyclin-D3 (293 aa).

Positions 27–152 constitute a Cyclin N-terminal domain; it reads VLQSLLRLEE…LVLGKLKWDL (126 aa). A disordered region spans residues 257-293; the sequence is REAAQTAPSPVPKAPGGSSSQGPSQTSTPTDVTAIHL. Phosphoserine is present on residues Ser-265 and Ser-280. Residues 271 to 286 show a composition bias toward low complexity; sequence PGGSSSQGPSQTSTPT. Position 284 is a phosphothreonine (Thr-284).

The protein belongs to the cyclin family. Cyclin D subfamily. In terms of assembly, interacts with the CDK4 and CDK6 protein kinases to form a serine/threonine kinase holoenzyme complex. The cyclin subunit imparts substrate specificity to the complex. Interacts with ATF5. Interacts with EIF3K. Component of the ternary complex cyclin D/CDK4/CDKN1B required for nuclear translocation and modulation of CDK4-mediated kinase activity. Can form similar complexes with either CDKN1A or CDKN2A. Phosphorylation at Thr-284 by MAP kinases is required for ubiquitination and degradation by the DCX(AMBRA1) complex. Post-translationally, ubiquitinated by the DCX(AMBRA1) complex during the transition from G1 to S cell phase, leading to its degradation: ubiquitination is dependent on Thr-284 phosphorylation. The DCX(AMBRA1) complex represents the major regulator of CCND3 stability during the G1/S transition. Polyubiquitinated by the SCF(FBXL2) complex, leading to proteasomal degradation.

The protein resides in the nucleus. Its subcellular location is the cytoplasm. Its function is as follows. Regulatory component of the cyclin D3-CDK4 (DC) complex that phosphorylates and inhibits members of the retinoblastoma (RB) protein family including RB1 and regulates the cell-cycle during G(1)/S transition. Phosphorylation of RB1 allows dissociation of the transcription factor E2F from the RB/E2F complex and the subsequent transcription of E2F target genes which are responsible for the progression through the G(1) phase. Hypophosphorylates RB1 in early G(1) phase. Cyclin D-CDK4 complexes are major integrators of various mitogenenic and antimitogenic signals. Component of the ternary complex, cyclin D3/CDK4/CDKN1B, required for nuclear translocation and activity of the cyclin D-CDK4 complex. Shows transcriptional coactivator activity with ATF5 independently of CDK4. This chain is G1/S-specific cyclin-D3, found in Rattus norvegicus (Rat).